A 332-amino-acid chain; its full sequence is Protoheme IX farnesyltransferase (332 aa).

Transmembrane regions (helical) follow at residues 63–83, 109–129, 132–152, 160–180, 188–208, 245–265, and 286–306; these read LICTLGGGALAAAAAGALNCL, TVFLGAVSCTFAAAMLLISGV, LAAGLTLLGLCSYVILYTIIL, IVFGGVAGAIPPLVGASAATG, WLFGLVMLWTPAHFWALAILL, ILGVFALPEGGLLYVIMLLPF, and AKGLFRWSILYMFGICLLLLI.

This sequence belongs to the UbiA prenyltransferase family. Protoheme IX farnesyltransferase subfamily.

It is found in the cell inner membrane. It catalyses the reaction heme b + (2E,6E)-farnesyl diphosphate + H2O = Fe(II)-heme o + diphosphate. It functions in the pathway porphyrin-containing compound metabolism; heme O biosynthesis; heme O from protoheme: step 1/1. Its function is as follows. Converts heme B (protoheme IX) to heme O by substitution of the vinyl group on carbon 2 of heme B porphyrin ring with a hydroxyethyl farnesyl side group. The chain is Protoheme IX farnesyltransferase from Prochlorococcus marinus (strain MIT 9515).